A 515-amino-acid chain; its full sequence is Maturase K (515 aa).

It belongs to the intron maturase 2 family. MatK subfamily.

The protein resides in the plastid. It localises to the chloroplast. Usually encoded in the trnK tRNA gene intron. Probably assists in splicing its own and other chloroplast group II introns. The polypeptide is Maturase K (Pinus patula (Mexican weeping pine)).